Consider the following 482-residue polypeptide: tRNA sulfurtransferase (482 aa).

The THUMP domain occupies 61-165 (LAIRDALTRI…DDRLLLIKGR (105 aa)). Residues 183–184 (LI), K265, G287, and Q296 each bind ATP. A disulfide bridge connects residues C344 and C456. The 79-residue stretch at 404 to 482 (FGPNDVILDI…GFANVKVYRP (79 aa)) folds into the Rhodanese domain. Residue C456 is the Cysteine persulfide intermediate of the active site.

Belongs to the ThiI family.

It is found in the cytoplasm. It catalyses the reaction [ThiI sulfur-carrier protein]-S-sulfanyl-L-cysteine + a uridine in tRNA + 2 reduced [2Fe-2S]-[ferredoxin] + ATP + H(+) = [ThiI sulfur-carrier protein]-L-cysteine + a 4-thiouridine in tRNA + 2 oxidized [2Fe-2S]-[ferredoxin] + AMP + diphosphate. It carries out the reaction [ThiS sulfur-carrier protein]-C-terminal Gly-Gly-AMP + S-sulfanyl-L-cysteinyl-[cysteine desulfurase] + AH2 = [ThiS sulfur-carrier protein]-C-terminal-Gly-aminoethanethioate + L-cysteinyl-[cysteine desulfurase] + A + AMP + 2 H(+). It participates in cofactor biosynthesis; thiamine diphosphate biosynthesis. Functionally, catalyzes the ATP-dependent transfer of a sulfur to tRNA to produce 4-thiouridine in position 8 of tRNAs, which functions as a near-UV photosensor. Also catalyzes the transfer of sulfur to the sulfur carrier protein ThiS, forming ThiS-thiocarboxylate. This is a step in the synthesis of thiazole, in the thiamine biosynthesis pathway. The sulfur is donated as persulfide by IscS. In Salmonella heidelberg (strain SL476), this protein is tRNA sulfurtransferase.